The primary structure comprises 547 residues: Chaperonin GroEL (547 aa).

ATP-binding positions include 30-33 (TLGP), lysine 51, 87-91 (DGTTT), glycine 415, 480-482 (NAA), and aspartate 496.

The protein belongs to the chaperonin (HSP60) family. As to quaternary structure, forms a cylinder of 14 subunits composed of two heptameric rings stacked back-to-back. Interacts with the co-chaperonin GroES.

It localises to the cytoplasm. It catalyses the reaction ATP + H2O + a folded polypeptide = ADP + phosphate + an unfolded polypeptide.. Together with its co-chaperonin GroES, plays an essential role in assisting protein folding. The GroEL-GroES system forms a nano-cage that allows encapsulation of the non-native substrate proteins and provides a physical environment optimized to promote and accelerate protein folding. The protein is Chaperonin GroEL of Glaesserella parasuis serovar 5 (strain SH0165) (Haemophilus parasuis).